A 684-amino-acid polypeptide reads, in one-letter code: Threonine--tRNA ligase (684 aa).

Residues 1-66 (MTAVASSAPA…DTDVEVTPVA (66 aa)) form the TGS domain. A catalytic region spans residues 261–567 (DHRKLGVELD…LTEHYAGAFP (307 aa)). Residues C366, H417, and H544 each contribute to the Zn(2+) site.

The protein belongs to the class-II aminoacyl-tRNA synthetase family. In terms of assembly, homodimer. It depends on Zn(2+) as a cofactor.

Its subcellular location is the cytoplasm. The enzyme catalyses tRNA(Thr) + L-threonine + ATP = L-threonyl-tRNA(Thr) + AMP + diphosphate + H(+). In terms of biological role, catalyzes the attachment of threonine to tRNA(Thr) in a two-step reaction: L-threonine is first activated by ATP to form Thr-AMP and then transferred to the acceptor end of tRNA(Thr). Also edits incorrectly charged L-seryl-tRNA(Thr). The polypeptide is Threonine--tRNA ligase (Mycolicibacterium smegmatis (strain ATCC 700084 / mc(2)155) (Mycobacterium smegmatis)).